The chain runs to 997 residues: Kinesin-like protein KIF19 (997 aa).

A Kinesin motor domain is found at 11–346 (QLTVALRIRP…LTYADRAKNI (336 aa)). Residue 104–111 (GPTGCGKT) coordinates ATP. The stretch at 360 to 437 (HIAQYTSIIS…REQMDIRRQL (78 aa)) forms a coiled coil. A compositionally biased stretch (basic and acidic residues) spans 468-491 (RARKWRDEHRKETYGKDDSEKDSD). The disordered stretch occupies residues 468–503 (RARKWRDEHRKETYGKDDSEKDSDTGDDQSDFIEPP). The stretch at 508–577 (ARETIQILEG…ELEIENTEMQ (70 aa)) forms a coiled coil. 3 disordered regions span residues 662–690 (NLTAEENLQEPDSDQESVRTFGSDNRNPI), 792–811 (GDRLQPMKERSNLSVHSMSE), and 848–890 (GGGS…SRSF). Composition is skewed to basic and acidic residues over residues 792–802 (GDRLQPMKERS) and 869–880 (QKLEKREESLEV). Residues 861–889 (HRTQKKQAQKLEKREESLEVKRRKKRSRS) are a coiled coil.

The protein belongs to the TRAFAC class myosin-kinesin ATPase superfamily. Kinesin family.

The protein resides in the cytoplasm. The protein localises to the cytoskeleton. It is found in the cell projection. Its subcellular location is the cilium. Functionally, plus end-directed microtubule-dependent motor protein that regulates the length of motile cilia by mediating depolymerization of microtubules at ciliary tips. The sequence is that of Kinesin-like protein KIF19 (kif19) from Xenopus laevis (African clawed frog).